The primary structure comprises 335 residues: tRNA N6-adenosine threonylcarbamoyltransferase (335 aa).

Residues histidine 107 and histidine 111 each coordinate Fe cation. Residues 129–133 (LVSGG), aspartate 162, glycine 175, and asparagine 268 each bind substrate. Position 296 (aspartate 296) interacts with Fe cation.

It belongs to the KAE1 / TsaD family. Fe(2+) serves as cofactor.

The protein localises to the cytoplasm. The enzyme catalyses L-threonylcarbamoyladenylate + adenosine(37) in tRNA = N(6)-L-threonylcarbamoyladenosine(37) in tRNA + AMP + H(+). Required for the formation of a threonylcarbamoyl group on adenosine at position 37 (t(6)A37) in tRNAs that read codons beginning with adenine. Is involved in the transfer of the threonylcarbamoyl moiety of threonylcarbamoyl-AMP (TC-AMP) to the N6 group of A37, together with TsaE and TsaB. TsaD likely plays a direct catalytic role in this reaction. This chain is tRNA N6-adenosine threonylcarbamoyltransferase, found in Campylobacter fetus subsp. fetus (strain 82-40).